A 234-amino-acid chain; its full sequence is LexA repressor (234 aa).

Residues 41–61 (RAEIANELGFKSANAAEEHLQ) constitute a DNA-binding region (H-T-H motif). Catalysis depends on for autocatalytic cleavage activity residues serine 152 and lysine 189.

It belongs to the peptidase S24 family. In terms of assembly, homodimer.

It carries out the reaction Hydrolysis of Ala-|-Gly bond in repressor LexA.. Represses a number of genes involved in the response to DNA damage (SOS response), including recA and lexA. In the presence of single-stranded DNA, RecA interacts with LexA causing an autocatalytic cleavage which disrupts the DNA-binding part of LexA, leading to derepression of the SOS regulon and eventually DNA repair. This Polaromonas sp. (strain JS666 / ATCC BAA-500) protein is LexA repressor.